The primary structure comprises 428 residues: Adenylosuccinate synthetase (428 aa).

GTP-binding positions include 12-18 (GDEGKGK) and 40-42 (GHT). The active-site Proton acceptor is Asp-13. Asp-13 and Gly-40 together coordinate Mg(2+). IMP is bound by residues 13-16 (DEGK), 38-41 (NAGH), Thr-130, Arg-144, Gln-225, Thr-240, and Arg-304. The Proton donor role is filled by His-41. 300 to 306 (VTTGRSR) contributes to the substrate binding site. Residues Arg-306, 332–334 (KID), and 414–416 (GVG) each bind GTP.

It belongs to the adenylosuccinate synthetase family. As to quaternary structure, homodimer. It depends on Mg(2+) as a cofactor.

Its subcellular location is the cytoplasm. It carries out the reaction IMP + L-aspartate + GTP = N(6)-(1,2-dicarboxyethyl)-AMP + GDP + phosphate + 2 H(+). Its pathway is purine metabolism; AMP biosynthesis via de novo pathway; AMP from IMP: step 1/2. In terms of biological role, plays an important role in the de novo pathway of purine nucleotide biosynthesis. Catalyzes the first committed step in the biosynthesis of AMP from IMP. This chain is Adenylosuccinate synthetase, found in Clostridium botulinum (strain Eklund 17B / Type B).